Consider the following 150-residue polypeptide: 16 kDa phloem protein 1 (150 aa).

In terms of domain architecture, C2 spans 1-108; the sequence is MGMGMMEVHL…LAEGVRKGKS (108 aa). Ca(2+)-binding residues include aspartate 20, aspartate 27, aspartate 78, aspartate 80, and aspartate 86.

Requires Ca(2+) as cofactor. In terms of tissue distribution, sieve elements of leaves, stems, roots and flowers.

Functionally, binds to both sense and antisense RNA. Interacts with mesophyll plasmodesmata to mediate its own cell-to-cell transport and potentiate RNA trafficking. This chain is 16 kDa phloem protein 1 (PP16-1), found in Cucurbita maxima (Pumpkin).